Here is an 894-residue protein sequence, read N- to C-terminus: Microsomal triglyceride transfer protein large subunit (894 aa).

The first 18 residues, 1–18 (MILLAVLFLCFISSYSAS), serve as a signal peptide directing secretion. A Vitellogenin domain is found at 28–662 (LNNDRLYKLK…YVGKTPLHAI (635 aa)). A disulfide bridge links C174 with C194.

Heterodimer; heterodimerizes with the protein disulfide isomerase (P4HB/PDI). Interacts with APOB. Interacts with PRAP1.

The protein resides in the endoplasmic reticulum. It localises to the golgi apparatus. The catalysed reaction is a 1,2-diacyl-sn-glycero-3-phosphocholine(in) = a 1,2-diacyl-sn-glycero-3-phosphocholine(out). The enzyme catalyses a 1,2-diacyl-sn-glycero-3-phosphoethanolamine(in) = a 1,2-diacyl-sn-glycero-3-phosphoethanolamine(out). It carries out the reaction a cholesterol ester(in) = a cholesterol ester(out). It catalyses the reaction a triacyl-sn-glycerol(in) = a triacyl-sn-glycerol(out). Its function is as follows. Catalyzes the transport of triglyceride, cholesteryl ester, and phospholipid between phospholipid surfaces. Required for the assembly and secretion of plasma lipoproteins that contain apolipoprotein B. May be involved in regulating cholesteryl ester biosynthesis in cells that produce lipoproteins. The sequence is that of Microsomal triglyceride transfer protein large subunit (MTTP) from Sus scrofa (Pig).